The following is an 860-amino-acid chain: Leucine--tRNA ligase (860 aa).

A 'HIGH' region motif is present at residues 42-52 (PYPSGRLHMGH). A 'KMSKS' region motif is present at residues 619 to 623 (KMSKS). Lysine 622 contacts ATP.

It belongs to the class-I aminoacyl-tRNA synthetase family.

It is found in the cytoplasm. It catalyses the reaction tRNA(Leu) + L-leucine + ATP = L-leucyl-tRNA(Leu) + AMP + diphosphate. The chain is Leucine--tRNA ligase from Escherichia coli O6:K15:H31 (strain 536 / UPEC).